The following is a 311-amino-acid chain: Homeobox protein Hox-B1a (311 aa).

Positions 217–276 (QNTIRTNFTTKQLTELEKEFHFSKYLTRARRVEIAATLELNETQVKIWFQNRRMKQKKRE) form a DNA-binding region, homeobox. The segment at 267–311 (NRRMKQKKREKEGLAPASSTSSKDLEDQSDHSTSTSPEASPSPDS) is disordered. Residues 298–311 (STSTSPEASPSPDS) show a composition bias toward low complexity.

This sequence belongs to the Antp homeobox family. Labial subfamily.

The protein resides in the nucleus. Functionally, sequence-specific transcription factor which is part of a developmental regulatory system that provides cells with specific positional identities on the anterior-posterior axis. The protein is Homeobox protein Hox-B1a (hoxb1a) of Danio rerio (Zebrafish).